A 572-amino-acid chain; its full sequence is Moesin/ezrin/radixin homolog 1 (572 aa).

Residues 1-291 (MNVRVTTMDA…GNHELYMRRR (291 aa)) form the FERM domain. The interval 456–491 (TTTPSHHHVEEEEEMDNEEELVNGENGNQDFSKDFD) is disordered. A compositionally biased stretch (acidic residues) spans 466-477 (EEEEMDNEEELV). Position 553 is a phosphothreonine (Thr553).

Interacts with cytoskeletal actin.

It is found in the cell junction. Its subcellular location is the adherens junction. The protein localises to the cell projection. The protein resides in the microvillus. It localises to the rhabdomere. It is found in the cell membrane. Its subcellular location is the cytoplasm. The protein localises to the cytoskeleton. Involved in connections of major cytoskeletal structures to the plasma membrane. This is Moesin/ezrin/radixin homolog 1 from Culex quinquefasciatus (Southern house mosquito).